Here is a 901-residue protein sequence, read N- to C-terminus: HTH-type transcriptional regulator MalT (901 aa).

An ATP-binding site is contributed by 39–46; it reads SPAGYGKT. Residues 829–894 enclose the HTH luxR-type domain; sequence ELIRTSPLTQ…DAVQHAQQLL (66 aa). A DNA-binding region (H-T-H motif) is located at residues 853 to 872; it reads NDQIAGELDVAATTIKTHIR.

The protein belongs to the MalT family. Monomer in solution. Oligomerizes to an active state in the presence of the positive effectors ATP and maltotriose.

Its activity is regulated as follows. Activated by ATP and maltotriose, which are both required for DNA binding. In terms of biological role, positively regulates the transcription of the maltose regulon whose gene products are responsible for uptake and catabolism of malto-oligosaccharides. Specifically binds to the promoter region of its target genes, recognizing a short DNA motif called the MalT box. The chain is HTH-type transcriptional regulator MalT from Cronobacter sakazakii (strain ATCC BAA-894) (Enterobacter sakazakii).